The sequence spans 238 residues: Ribonuclease PH (238 aa).

Phosphate is bound by residues R86 and 124–126; that span reads GTR.

Belongs to the RNase PH family. Homohexameric ring arranged as a trimer of dimers.

It carries out the reaction tRNA(n+1) + phosphate = tRNA(n) + a ribonucleoside 5'-diphosphate. Functionally, phosphorolytic 3'-5' exoribonuclease that plays an important role in tRNA 3'-end maturation. Removes nucleotide residues following the 3'-CCA terminus of tRNAs; can also add nucleotides to the ends of RNA molecules by using nucleoside diphosphates as substrates, but this may not be physiologically important. Probably plays a role in initiation of 16S rRNA degradation (leading to ribosome degradation) during starvation. This is Ribonuclease PH from Actinobacillus pleuropneumoniae serotype 7 (strain AP76).